We begin with the raw amino-acid sequence, 258 residues long: Axonemal dynein light intermediate polypeptide 1 (258 aa).

2 disordered regions span residues 1–60 and 207–231; these read MIPP…CVPD and VNEQ…EEKK. Low complexity predominate over residues 34-44; it reads SPQQPGPSGSA. Residues 176–255 are a coiled coil; the sequence is MRKALQAEQG…LKAQLEGIIA (80 aa).

Belongs to the inner dynein arm light chain family. Interacts with CFAP45. Interacts with DYNC1H1. In terms of tissue distribution, expressed in many tissues. A smaller 0.9 kb and a larger 2.5 kb transcripts were detected at the highest level in the testis, at medium levels in the prostate, heart, liver, lung and pancreas, at low levels in the ovary, skeletal muscle and small intestine. Not detected in spleen, colon epithelium, thymus or peripheral blood leukocytes. The 0.9 kb transcript is expressed at a 20-fold higher level than the 2.5 kb transcript in the testis. Expressed in spermatozoa and airway epithelial cells (at protein level).

It localises to the cell projection. It is found in the cilium. The protein resides in the flagellum. Its subcellular location is the dynein axonemal particle. The protein localises to the cytoplasm. In terms of biological role, involved in sperm flagellum assembly. In Homo sapiens (Human), this protein is Axonemal dynein light intermediate polypeptide 1.